We begin with the raw amino-acid sequence, 580 residues long: DBIRD complex subunit ZNF326 (580 aa).

Residues 1-124 (MDFEDDYVHS…YRNSLDSFGG (124 aa)) are mediates transcriptional activation. A phosphoserine mark is found at S48, S56, S63, S69, S81, S82, S91, S106, S114, S118, S121, and S137. Residue K140 forms a Glycyl lysine isopeptide (Lys-Gly) (interchain with G-Cter in SUMO2) linkage. The interval 156 to 196 (SYSSFSSPHMKPAPVGSRGRGTPAYPESTFGSRSYDAFGGP) is disordered. R173 is subject to Omega-N-methylarginine. S212 carries the phosphoserine modification. Position 235 is an omega-N-methylarginine (R235). A Bipartite nuclear localization signal motif is present at residues 238 to 260 (KRKMMQIFIKPGGAFIKKPKLAK). K240 participates in a covalent cross-link: Glycyl lysine isopeptide (Lys-Gly) (interchain with G-Cter in SUMO2). K247 carries the N6-acetyllysine; alternate modification. K247 is covalently cross-linked (Glycyl lysine isopeptide (Lys-Gly) (interchain with G-Cter in SUMO2); alternate). Residues K254 and K264 each participate in a glycyl lysine isopeptide (Lys-Gly) (interchain with G-Cter in SUMO2) cross-link. The disordered stretch occupies residues 256-302 (PKLAKPMDKMNLSKSPTKTDPKNEEEEKRRIEARREKQRRRREKNSE). S270 carries the post-translational modification Phosphoserine. The segment covering 272–290 (TKTDPKNEEEEKRRIEARR) has biased composition (basic and acidic residues). The C2H2 AKAP95-type 1 zinc-finger motif lies at 314 to 336 (CSFCKFRTFEEKDIELHLESSSH). A Glycyl lysine isopeptide (Lys-Gly) (interchain with G-Cter in SUMO2) cross-link involves residue K401. Residues 407–430 (CSACSVYIPALHSSVQLHLKSPDH) form a C2H2 AKAP95-type 2 zinc finger. Residues K459 and K467 each participate in a glycyl lysine isopeptide (Lys-Gly) (interchain with G-Cter in SUMO2) cross-link. Residues 470–580 (NPFEIQDHPQ…ATEQCEHRQM (111 aa)) are disordered. Positions 483–529 (IEGDEEDEEKIDEPIEEEEEEEEEEEEEGEEAGSVEEEGDVEGEEGT) are enriched in acidic residues. Over residues 530-539 (AEAAAAGEAD) the composition is skewed to low complexity. The span at 540 to 562 (AVGEAEGAGEAEEAEEEEEEEGT) shows a compositional bias: acidic residues.

Belongs to the AKAP95 family. As to quaternary structure, component of the DBIRD complex. Interacts with CCAR2; the interaction is direct. As to expression, ubiquitously expressed in adult tissues. Highly expressed in neuronal tissues such as brain and neural tube.

The protein localises to the nucleus matrix. Functionally, core component of the DBIRD complex, a multiprotein complex that acts at the interface between core mRNP particles and RNA polymerase II (RNAPII) and integrates transcript elongation with the regulation of alternative splicing: the DBIRD complex affects local transcript elongation rates and alternative splicing of a large set of exons embedded in (A + T)-rich DNA regions. May also play a role in neuronal differentiation. Able to bind DNA and activate expression in vitro. The polypeptide is DBIRD complex subunit ZNF326 (Znf326) (Mus musculus (Mouse)).